Here is a 223-residue protein sequence, read N- to C-terminus: Triosephosphate isomerase (223 aa).

10–12 contributes to the substrate binding site; that stretch reads NFK. The active-site Electrophile is the His-94. The active-site Proton acceptor is the Glu-142. Substrate-binding positions include Ile-147, Gly-182, and 203–204; that span reads AS.

This sequence belongs to the triosephosphate isomerase family. In terms of assembly, homotetramer; dimer of dimers.

Its subcellular location is the cytoplasm. The catalysed reaction is D-glyceraldehyde 3-phosphate = dihydroxyacetone phosphate. The protein operates within carbohydrate biosynthesis; gluconeogenesis. It functions in the pathway carbohydrate degradation; glycolysis; D-glyceraldehyde 3-phosphate from glycerone phosphate: step 1/1. In terms of biological role, involved in the gluconeogenesis. Catalyzes stereospecifically the conversion of dihydroxyacetone phosphate (DHAP) to D-glyceraldehyde-3-phosphate (G3P). This chain is Triosephosphate isomerase, found in Archaeoglobus fulgidus (strain ATCC 49558 / DSM 4304 / JCM 9628 / NBRC 100126 / VC-16).